An 82-amino-acid chain; its full sequence is MNAIRYPFITEKAMMLMDENKLQFVVDTRANKTQVENDVVKMYGFTVKSVCTMTTMKGLKKALVTFNETDAAHEIATRIGLV.

The protein belongs to the universal ribosomal protein uL23 family. Part of the 50S ribosomal subunit. Contacts protein L29.

In terms of biological role, binds to 23S rRNA. One of the proteins that surrounds the polypeptide exit tunnel on the outside of the ribosome. This chain is Large ribosomal subunit protein uL23, found in Methanococcoides burtonii (strain DSM 6242 / NBRC 107633 / OCM 468 / ACE-M).